The sequence spans 657 residues: Penicillin-binding protein activator LpoA (657 aa).

The first 25 residues, Met1–Ala25, serve as a signal peptide directing secretion. A lipid anchor (N-palmitoyl cysteine) is attached at Cys26. A lipid anchor (S-diacylglycerol cysteine) is attached at Cys26.

This sequence belongs to the LpoA family. In terms of assembly, interacts with PBP1a.

The protein localises to the cell outer membrane. Regulator of peptidoglycan synthesis that is essential for the function of penicillin-binding protein 1A (PBP1a). The sequence is that of Penicillin-binding protein activator LpoA from Yersinia pestis bv. Antiqua (strain Angola).